Consider the following 359-residue polypeptide: MPQELVYTLQQLADLLKVEVQGNTETPISGVEEISAAKAHHVTFLDNEKYARFIKITEAGAIILSKAQAQKYGHLNKNFLIVSEFPSIAFQKCIELFISPVDSGFPGIHPTAVIHPTASIGKDVCIEPYAVICQHACIGDSTYIGTGSVIGAYSTLGEHCLVHPKVVVRERVEIGKRVIIQPGAVIGSCGFGYITNAFGRHKHLKHLGKVIIEDDVEIGANTTIDRGRFKNSVIREGTKIDNQVQIAHHVEVGKHSMIVAQAGIAGSTKIGNHVIIGGQTGITGHISITDHVIMMAQTGVTKSISSPGIYGGAPARPYQEIHRQVAKIRSLPKLEERLGMLEEKVKGLSAQSTELQITP.

His-248 serves as the catalytic Proton acceptor.

It belongs to the transferase hexapeptide repeat family. LpxD subfamily. As to quaternary structure, homotrimer.

The catalysed reaction is a UDP-3-O-[(3R)-3-hydroxyacyl]-alpha-D-glucosamine + a (3R)-hydroxyacyl-[ACP] = a UDP-2-N,3-O-bis[(3R)-3-hydroxyacyl]-alpha-D-glucosamine + holo-[ACP] + H(+). It participates in bacterial outer membrane biogenesis; LPS lipid A biosynthesis. In terms of biological role, catalyzes the N-acylation of UDP-3-O-acylglucosamine using 3-hydroxyacyl-ACP as the acyl donor. Is involved in the biosynthesis of lipid A, a phosphorylated glycolipid that anchors the lipopolysaccharide to the outer membrane of the cell. The polypeptide is UDP-3-O-acylglucosamine N-acyltransferase (Chlamydia abortus (strain DSM 27085 / S26/3) (Chlamydophila abortus)).